Reading from the N-terminus, the 404-residue chain is Arginine biosynthesis bifunctional protein ArgJ (404 aa).

T166, K189, T200, E280, N399, and S404 together coordinate substrate. The active-site Nucleophile is the T200.

Belongs to the ArgJ family. In terms of assembly, heterotetramer of two alpha and two beta chains.

The protein resides in the cytoplasm. It catalyses the reaction N(2)-acetyl-L-ornithine + L-glutamate = N-acetyl-L-glutamate + L-ornithine. The catalysed reaction is L-glutamate + acetyl-CoA = N-acetyl-L-glutamate + CoA + H(+). It participates in amino-acid biosynthesis; L-arginine biosynthesis; L-ornithine and N-acetyl-L-glutamate from L-glutamate and N(2)-acetyl-L-ornithine (cyclic): step 1/1. The protein operates within amino-acid biosynthesis; L-arginine biosynthesis; N(2)-acetyl-L-ornithine from L-glutamate: step 1/4. Its function is as follows. Catalyzes two activities which are involved in the cyclic version of arginine biosynthesis: the synthesis of N-acetylglutamate from glutamate and acetyl-CoA as the acetyl donor, and of ornithine by transacetylation between N(2)-acetylornithine and glutamate. This is Arginine biosynthesis bifunctional protein ArgJ from Mycobacterium bovis (strain ATCC BAA-935 / AF2122/97).